Reading from the N-terminus, the 543-residue chain is Exodeoxyribonuclease 7 large subunit (543 aa).

The interval Val498–Phe543 is disordered.

This sequence belongs to the XseA family. As to quaternary structure, heterooligomer composed of large and small subunits.

The protein resides in the cytoplasm. The catalysed reaction is Exonucleolytic cleavage in either 5'- to 3'- or 3'- to 5'-direction to yield nucleoside 5'-phosphates.. Functionally, bidirectionally degrades single-stranded DNA into large acid-insoluble oligonucleotides, which are then degraded further into small acid-soluble oligonucleotides. This Allorhizobium ampelinum (strain ATCC BAA-846 / DSM 112012 / S4) (Agrobacterium vitis (strain S4)) protein is Exodeoxyribonuclease 7 large subunit.